The sequence spans 447 residues: Cobyrinate a,c-diamide synthase (447 aa).

One can recognise a GATase cobBQ-type domain in the interval 252–439; the sequence is KIAVAFDESF…AHQHCIGNPY (188 aa). The active-site Nucleophile is Cys-331.

It belongs to the CobB/CbiA family. Requires Mg(2+) as cofactor.

It catalyses the reaction cob(II)yrinate + 2 L-glutamine + 2 ATP + 2 H2O = cob(II)yrinate a,c diamide + 2 L-glutamate + 2 ADP + 2 phosphate + 2 H(+). It carries out the reaction Ni-sirohydrochlorin + 2 L-glutamine + 2 ATP + 2 H2O = Ni-sirohydrochlorin a,c-diamide + 2 L-glutamate + 2 ADP + 2 phosphate + 2 H(+). It functions in the pathway cofactor biosynthesis; adenosylcobalamin biosynthesis; cob(II)yrinate a,c-diamide from sirohydrochlorin (anaerobic route): step 10/10. Functionally, catalyzes the ATP-dependent amidation of the two carboxylate groups at positions a and c of cobyrinate, using either L-glutamine or ammonia as the nitrogen source. Involved in the biosynthesis of the unique nickel-containing tetrapyrrole coenzyme F430, the prosthetic group of methyl-coenzyme M reductase (MCR), which plays a key role in methanogenesis and anaerobic methane oxidation. Catalyzes the ATP-dependent amidation of the two carboxylate groups at positions a and c of Ni-sirohydrochlorin, using L-glutamine or ammonia as the nitrogen source. This is Cobyrinate a,c-diamide synthase from Methanococcus maripaludis (strain C5 / ATCC BAA-1333).